Here is a 372-residue protein sequence, read N- to C-terminus: Saccharopine dehydrogenase [NAD(+), L-lysine-forming] (372 aa).

Residues R18 and K77 each contribute to the L-saccharopine site. K77 acts as the Proton acceptor in catalysis. H95 (proton donor) is an active-site residue. L-saccharopine is bound at residue Q100. R129 provides a ligand contact to NAD(+). The L-saccharopine site is built by R130 and F134. NAD(+)-binding positions include 200–201 (GR), D224, T228, Y248, and V275. The cysteines at positions 202 and 246 are disulfide-linked. 276 to 278 (SAD) serves as a coordination point for L-saccharopine. 316-319 (IDHL) lines the NAD(+) pocket.

It belongs to the AlaDH/PNT family. Monomer.

The catalysed reaction is L-saccharopine + NAD(+) + H2O = L-lysine + 2-oxoglutarate + NADH + H(+). The protein operates within amino-acid biosynthesis; L-lysine biosynthesis via AAA pathway; L-lysine from L-alpha-aminoadipate (fungal route): step 3/3. Functionally, catalyzes the NAD(+)-dependent cleavage of saccharopine to L-lysine and 2-oxoglutarate, the final step in the alpha-aminoadipate (AAA) pathway for lysin biosynthesis. This is Saccharopine dehydrogenase [NAD(+), L-lysine-forming] (lys-4) from Neurospora crassa (strain ATCC 24698 / 74-OR23-1A / CBS 708.71 / DSM 1257 / FGSC 987).